The following is a 97-amino-acid chain: Putative septation protein SpoVG (97 aa).

This sequence belongs to the SpoVG family.

In terms of biological role, essential for sporulation. Interferes with or is a negative regulator of the pathway leading to asymmetric septation. The chain is Putative septation protein SpoVG from Bacillus cytotoxicus (strain DSM 22905 / CIP 110041 / 391-98 / NVH 391-98).